Here is a 201-residue protein sequence, read N- to C-terminus: Imidazole glycerol phosphate synthase subunit HisH (201 aa).

One can recognise a Glutamine amidotransferase type-1 domain in the interval 1–201 (MVFIADYGAG…LQVLKNFAEF (201 aa)). The Nucleophile role is filled by Cys-79. Active-site residues include His-183 and Glu-185.

In terms of assembly, heterodimer of HisH and HisF.

Its subcellular location is the cytoplasm. It catalyses the reaction 5-[(5-phospho-1-deoxy-D-ribulos-1-ylimino)methylamino]-1-(5-phospho-beta-D-ribosyl)imidazole-4-carboxamide + L-glutamine = D-erythro-1-(imidazol-4-yl)glycerol 3-phosphate + 5-amino-1-(5-phospho-beta-D-ribosyl)imidazole-4-carboxamide + L-glutamate + H(+). It carries out the reaction L-glutamine + H2O = L-glutamate + NH4(+). Its pathway is amino-acid biosynthesis; L-histidine biosynthesis; L-histidine from 5-phospho-alpha-D-ribose 1-diphosphate: step 5/9. Its function is as follows. IGPS catalyzes the conversion of PRFAR and glutamine to IGP, AICAR and glutamate. The HisH subunit catalyzes the hydrolysis of glutamine to glutamate and ammonia as part of the synthesis of IGP and AICAR. The resulting ammonia molecule is channeled to the active site of HisF. This chain is Imidazole glycerol phosphate synthase subunit HisH, found in Chlorobaculum tepidum (strain ATCC 49652 / DSM 12025 / NBRC 103806 / TLS) (Chlorobium tepidum).